Reading from the N-terminus, the 125-residue chain is Glycine cleavage system H protein (125 aa).

A Lipoyl-binding domain is found at Thr-23–Lys-103. At Lys-64 the chain carries N6-lipoyllysine.

It belongs to the GcvH family. As to quaternary structure, the glycine cleavage system is composed of four proteins: P, T, L and H. (R)-lipoate is required as a cofactor.

Its function is as follows. The glycine cleavage system catalyzes the degradation of glycine. The H protein shuttles the methylamine group of glycine from the P protein to the T protein. This Chlorobium chlorochromatii (strain CaD3) protein is Glycine cleavage system H protein.